Here is a 953-residue protein sequence, read N- to C-terminus: MTAAENVCYTLINVPMDSEPPSEISLKNDLEKGDVKSKTEALKKVIIMILNGEKLPGLLMTIIRFVLPLQDHTIKKLLLVFWEIVPKTTPDGRLLHEMILVCDAYRKDLQHPNEFIRGSTLRFLCKLKEAELLEPLMPAIRACLEHRHSYVRRNAVLAIYTIYRNFEHLIPDAPELIHDFLVDEKDASCKRNAFMMLIHADQDRALDYLSTCIDQVQTFGDILQLVIVELIYKACHANPSERARFIRCIYNLLQSSSPAVKYEAAGTLVTLSSAPTAIKAAAQCYIDLIIKESDNNVKLIVLDRLIELKEHPAHERVLQDLVMDILRVLSTPDLEVRKKTLQLALDLVSSRNVEELVIVLKKEVIKTNNVSEHEDTDKYRQLLVRTLHSCSVRFPDMAANVIPVLMEFLSDNNEAAAADVLEFVREAIQRFDNLRMLIVEKMLEVFHAIKSVKIYRGALWILGEYCSTKEDIQSVMTEIRRSLGEIPIVESEIKKEAGELKPEEEITVGPVQKLVTEMGTYATQSALSSSRPTKKEEDRPPLRGFLLDGDFFVAASLATTLTKIALRYVALVQEKKKQNSFVAEAMLLMATILHLGKSSLPKKPITDDDVDRISLCLKVLSECSPLMNDIFNKECRQSLSHMLSAKLEEEKLSQKKESEKRNVTVQPDDPISFMQLTAKNEMNCKEDQFQLSLLAAMGNTQRKEAADPLASKLNKVTQLTGFSDPVYAEAYVHVNQYDIVLDVLVVNQTSDTLQNCTLELATLGDLKLVEKPSPLTLAPHDFANIKANVKVASTENGIIFGNIVYDVSGAASDRNCVVLSDIHIDIMDYIQPATCTDAEFRQMWAEFEWENKVTVNTNMIDLNDYLRHILKSTNMKCLTPEKALSGYCGFMAANLYARSIFGEDALANVSIEKPIHQGPDAAVTGHIRIRAKSQGMALSLGDKINLSQKKTSI.

Threonine 2 carries the N-acetylthreonine modification. 6 HEAT repeats span residues 96-131, 132-168, 240-276, 277-314, 316-353, and 396-433; these read HEMI…KEAE, LLEP…NFEH, SERA…SAPT, AIKA…HPAH, RVLQ…SRNV, and DMAA…RFDN. Residue lysine 494 is modified to N6-acetyllysine.

Oligomeric complex that consists of at least the alpha, beta, beta', gamma, delta, epsilon and zeta subunits. Interacts (via C-terminus) with HIV-1 Nef; the interaction is direct. Interacts with CAPN8 and PRKCE. Interacts with SCYL1. Interacts with COPG1. Interacts with ARF1 (myristoylated); this interaction is required for binding of COPB1 to Golgi membranes. Interacts (via trunk domain) with ARF1 (via switch I region); the interaction is direct. Interacts with KCNK2 (via N-terminus); this interaction increases the channel-mediated whole cell currents and promotes plasma membrane expression of KCNK2. Interacts with anthrax lethal factor (LF); this interaction may facilitate endosomal vesicle membrane translocation of LF and its release from the lumen of endosomal vesicles to external milieu. Interacts with STX17. Interacts with TMEM115. Interacts with TMEM41B.

Its subcellular location is the cytoplasm. The protein localises to the golgi apparatus membrane. It localises to the cytoplasmic vesicle. It is found in the COPI-coated vesicle membrane. The protein resides in the cell membrane. Its subcellular location is the endoplasmic reticulum-Golgi intermediate compartment. In terms of biological role, the coatomer is a cytosolic protein complex that binds to dilysine motifs and reversibly associates with Golgi non-clathrin-coated vesicles, which further mediate biosynthetic protein transport from the ER, via the Golgi up to the trans Golgi network. Coatomer complex is required for budding from Golgi membranes, and is essential for the retrograde Golgi-to-ER transport of dilysine-tagged proteins. In mammals, the coatomer can only be recruited by membranes associated to ADP-ribosylation factors (ARFs), which are small GTP-binding proteins; the complex also influences the Golgi structural integrity, as well as the processing, activity, and endocytic recycling of LDL receptors. Plays a functional role in facilitating the transport of kappa-type opioid receptor mRNAs into axons and enhances translation of these proteins. Required for limiting lipid storage in lipid droplets. Involved in lipid homeostasis by regulating the presence of perilipin family members PLIN2 and PLIN3 at the lipid droplet surface and promoting the association of adipocyte surface triglyceride lipase (PNPLA2) with the lipid droplet to mediate lipolysis. Involved in the Golgi disassembly and reassembly processes during cell cycle. Involved in autophagy by playing a role in early endosome function. Plays a role in organellar compartmentalization of secretory compartments including endoplasmic reticulum (ER)-Golgi intermediate compartment (ERGIC), Golgi, trans-Golgi network (TGN) and recycling endosomes, and in biosynthetic transport of CAV1. Promotes degradation of Nef cellular targets CD4 and MHC class I antigens by facilitating their trafficking to degradative compartments. In Pongo abelii (Sumatran orangutan), this protein is Coatomer subunit beta (COPB1).